The chain runs to 964 residues: Isoleucine--tRNA ligase (964 aa).

Positions Pro66–His76 match the 'HIGH' region motif. Glu596 contributes to the L-isoleucyl-5'-AMP binding site. The 'KMSKS' region signature appears at Lys637–Ser641. Lys640 contributes to the ATP binding site. Zn(2+) contacts are provided by Cys927, Cys930, Cys947, and Cys950.

The protein belongs to the class-I aminoacyl-tRNA synthetase family. IleS type 1 subfamily. Monomer. Requires Zn(2+) as cofactor.

It localises to the cytoplasm. The enzyme catalyses tRNA(Ile) + L-isoleucine + ATP = L-isoleucyl-tRNA(Ile) + AMP + diphosphate. Functionally, catalyzes the attachment of isoleucine to tRNA(Ile). As IleRS can inadvertently accommodate and process structurally similar amino acids such as valine, to avoid such errors it has two additional distinct tRNA(Ile)-dependent editing activities. One activity is designated as 'pretransfer' editing and involves the hydrolysis of activated Val-AMP. The other activity is designated 'posttransfer' editing and involves deacylation of mischarged Val-tRNA(Ile). The protein is Isoleucine--tRNA ligase of Cupriavidus necator (strain ATCC 17699 / DSM 428 / KCTC 22496 / NCIMB 10442 / H16 / Stanier 337) (Ralstonia eutropha).